The following is a 433-amino-acid chain: Phosphoglycerate kinase, chloroplastic (433 aa).

Residues 1–28 (GASFSLHVLSKINSYKSQSTKPIRGVAS) constitute a chloroplast transit peptide. Residues A51, D52, N54, R68, S90, H91, G93, R94, R149, H181, and R182 each contribute to the (2R)-3-phosphoglycerate site. G227 lines the ADP pocket. G227 contributes to the CDP binding site. AMP-binding residues include K229 and K233. K233 contributes to the ATP binding site. G251 contributes to the ADP binding site. CDP is bound at residue G251. 2 residues coordinate AMP: G252 and G324. Positions 252 and 324 each coordinate ATP. G349 and F354 together coordinate CDP. F354 contributes to the ADP binding site. Residue E355 participates in AMP binding. The ATP site is built by E355, D386, and S387. D386 is a binding site for Mg(2+).

Belongs to the phosphoglycerate kinase family. Monomer. It depends on Mg(2+) as a cofactor.

It is found in the plastid. The protein resides in the chloroplast. It catalyses the reaction (2R)-3-phosphoglycerate + ATP = (2R)-3-phospho-glyceroyl phosphate + ADP. Its pathway is carbohydrate biosynthesis; Calvin cycle. This Spinacia oleracea (Spinach) protein is Phosphoglycerate kinase, chloroplastic.